A 249-amino-acid chain; its full sequence is Segregation and condensation protein A (249 aa).

The protein belongs to the ScpA family. As to quaternary structure, component of a cohesin-like complex composed of ScpA, ScpB and the Smc homodimer, in which ScpA and ScpB bind to the head domain of Smc. The presence of the three proteins is required for the association of the complex with DNA.

It localises to the cytoplasm. Its function is as follows. Participates in chromosomal partition during cell division. May act via the formation of a condensin-like complex containing Smc and ScpB that pull DNA away from mid-cell into both cell halves. In Oceanobacillus iheyensis (strain DSM 14371 / CIP 107618 / JCM 11309 / KCTC 3954 / HTE831), this protein is Segregation and condensation protein A.